The sequence spans 242 residues: Uridylate kinase (242 aa).

Lys-11–Gly-14 is an ATP binding site. Residues Gly-19 to Gly-24 are involved in allosteric activation by GTP. Gly-53 lines the UMP pocket. 2 residues coordinate ATP: Gly-54 and Arg-58. UMP is bound by residues Asp-73 and Ser-134 to Thr-141. Positions 161, 167, and 170 each coordinate ATP.

This sequence belongs to the UMP kinase family. As to quaternary structure, homohexamer.

Its subcellular location is the cytoplasm. The catalysed reaction is UMP + ATP = UDP + ADP. It functions in the pathway pyrimidine metabolism; CTP biosynthesis via de novo pathway; UDP from UMP (UMPK route): step 1/1. With respect to regulation, allosterically activated by GTP. Inhibited by UTP. Its function is as follows. Catalyzes the reversible phosphorylation of UMP to UDP. The sequence is that of Uridylate kinase from Trichormus variabilis (strain ATCC 29413 / PCC 7937) (Anabaena variabilis).